A 232-amino-acid polypeptide reads, in one-letter code: Enolase-phosphatase E1 (232 aa).

This sequence belongs to the HAD-like hydrolase superfamily. MasA/MtnC family. As to quaternary structure, monomer. It depends on Mg(2+) as a cofactor.

It carries out the reaction 5-methylsulfanyl-2,3-dioxopentyl phosphate + H2O = 1,2-dihydroxy-5-(methylsulfanyl)pent-1-en-3-one + phosphate. It functions in the pathway amino-acid biosynthesis; L-methionine biosynthesis via salvage pathway; L-methionine from S-methyl-5-thio-alpha-D-ribose 1-phosphate: step 3/6. The protein operates within amino-acid biosynthesis; L-methionine biosynthesis via salvage pathway; L-methionine from S-methyl-5-thio-alpha-D-ribose 1-phosphate: step 4/6. In terms of biological role, bifunctional enzyme that catalyzes the enolization of 2,3-diketo-5-methylthiopentyl-1-phosphate (DK-MTP-1-P) into the intermediate 2-hydroxy-3-keto-5-methylthiopentenyl-1-phosphate (HK-MTPenyl-1-P), which is then dephosphorylated to form the acireductone 1,2-dihydroxy-3-keto-5-methylthiopentene (DHK-MTPene). The sequence is that of Enolase-phosphatase E1 from Xylella fastidiosa (strain Temecula1 / ATCC 700964).